Consider the following 421-residue polypeptide: Telomeric repeat-binding factor 1 (421 aa).

The interval 1–30 is disordered; the sequence is MAETVSSAARDAPSREGWTDSDSPEQEEVG. N-acetylalanine is present on Ala-2. The tract at residues 49–255 is TRFH mediates dimerization; the sequence is ENAELVAEVE…AATKVVENEK (207 aa). Lys-200 is covalently cross-linked (Glycyl lysine isopeptide (Lys-Gly) (interchain with G-Cter in SUMO2)). Position 206 is a phosphoserine; by ATM (Ser-206). Positions 252-365 are interaction with RLIM; sequence ENEKARTQAS…PDTDDKSGRR (114 aa). Over residues 253-266 the composition is skewed to basic and acidic residues; that stretch reads NEKARTQASKDRPD. The interval 253–366 is disordered; the sequence is NEKARTQASK…DTDDKSGRRK (114 aa). A compositionally biased stretch (polar residues) spans 284–310; the sequence is VNGQQSTETEPLVDTVSSIRSHKNALS. The short motif at 313–367 is the Nuclear localization signal element; sequence KHRRAPSDFSRNEARTGTLQCETTMERNRRTSGRNRLCVSENQPDTDDKSGRRKR. Residues 362-419 enclose the HTH myb-type domain; that stretch reads SGRRKRQTWLWEEDRILKCGVKKYGEGNWAKILSHYKFNNRTSVMLKDRWRTMKRLKL. The H-T-H motif DNA-binding region spans 390–415; sequence WAKILSHYKFNNRTSVMLKDRWRTMK.

As to quaternary structure, homodimer; can contain both isoforms. Found in a complex with POT1; TINF2 and TNKS1. Interacts with ATM, TINF2, TNKS1, TNKS2, PINX1, NEK2 and MAPRE1. Component of the shelterin complex (telosome) composed of TERF1, TERF2, TINF2, TERF2IP ACD and POT1. Interacts with RLIM (via N-terminus). Interacts with FBXO4. Interaction with TINF2 protects against interaction with FBXO4 and subsequent polyubiquitination and proteasomal degradation. Interacts with GNL3L; this interaction promotes homodimerization. Interacts with TIN2. Interactions with GNL3L and TIN2 are mutually exclusive. Interacts with RTEL1. Interacts with CCDC79/TERB1. In terms of processing, phosphorylated preferentially on Ser-219 in an ATM-dependent manner in response to ionizing DNA damage. Post-translationally, ADP-ribosylation by TNKS1 or TNKS2 diminishes its ability to bind to telomeric DNA. Ubiquitinated by RLIM/RNF12, leading to its degradation by the proteasome. Ubiquitinated by a SCF (SKP1-CUL1-F-box protein) ubiquitin-protein ligase complex, leading to its degradation by the proteasome.

The protein resides in the nucleus. Its subcellular location is the chromosome. It is found in the telomere. It localises to the cytoplasm. The protein localises to the cytoskeleton. The protein resides in the spindle. Functionally, binds the telomeric double-stranded 5'-TTAGGG-3' repeat and negatively regulates telomere length. Involved in the regulation of the mitotic spindle. Component of the shelterin complex (telosome) that is involved in the regulation of telomere length and protection. Shelterin associates with arrays of double-stranded 5'-TTAGGG-3' repeats added by telomerase and protects chromosome ends; without its protective activity, telomeres are no longer hidden from the DNA damage surveillance and chromosome ends are inappropriately processed by DNA repair pathways. In Mus musculus (Mouse), this protein is Telomeric repeat-binding factor 1 (Terf1).